The chain runs to 2003 residues: Histone acetyltransferase KAT6A (2003 aa).

An SAMD1-like winged helix (WH) domain is found at 1–77; it reads MVKLANPLYT…LNSYKDPDNP (77 aa). Positions 1–144 are required for activation of RUNX1-1; the sequence is MVKLANPLYT…CGGSAAPGFH (144 aa). Residues 52–166 are required for nuclear localization; that stretch reads ELSVKDGTIL…HGRLLKDGPL (115 aa). The 77-residue stretch at 95–171 folds into the H15 domain; the sequence is QSVDWNKLLK…KDGPLYRLNT (77 aa). An interaction with PML region spans residues 144–663; it reads HQQLRLAIKR…RKGYGRFLID (520 aa). Lys172 carries the N6-acetyllysine modification. 2 consecutive PHD-type zinc fingers follow at residues 206–265 and 262–313; these read IPIC…CKTC and CKTC…CRPR. The interaction with RUNX1-1 stretch occupies residues 312 to 663; sequence PRKKGRKLLQ…RKGYGRFLID (352 aa). The interval 336 to 377 is disordered; sequence GRPKNRLKKQNTVSKGPFSKVRTGPGRGRKRKITVSSQSASS. Lys350 and Lys355 each carry N6-acetyllysine. Phosphothreonine; by PKB/AKT1 is present on Thr369. Residue Ser419 is modified to Phosphoserine. Residues 439-466 form a disordered region; the sequence is RKKGNRKSSTSDWPTDNQDGWESKQENE. Over residues 445 to 458 the composition is skewed to polar residues; it reads KSSTSDWPTDNQDG. The residue at position 472 (Ser472) is a Phosphoserine. Positions 487–777 are catalytic; sequence IQEQALQKVG…VDPECLRWTP (291 aa). One can recognise an MYST-type HAT domain in the interval 503–777; that stretch reads PQVRCPSVIE…VDPECLRWTP (275 aa). The mediates interaction with BRPF1, required for histone H3 acetyltransferase activity stretch occupies residues 506–809; the sequence is RCPSVIEFGK…EPQGQERELE (304 aa). The segment at 536–561 adopts a C2HC MYST-type zinc-finger fold; sequence LYLCEFCLKYMKSRTILQQHMKKCGW. The residue at position 603 (Lys603) is an N6-acetyllysine; by autocatalysis. Residues 644–648 and 653–659 contribute to the acetyl-CoA site; these read SCIMI and QRKGYGR. Glu679 (proton donor/acceptor) is an active-site residue. Ser683 is a binding site for acetyl-CoA. Positions 784 to 939 are disordered; sequence VVSEDEDEEA…DGKPDIPKGR (156 aa). Position 786 is a phosphoserine (Ser786). Positions 786-798 are enriched in acidic residues; it reads SEDEDEEADEGEK. The span at 799 to 841 shows a compositional bias: basic and acidic residues; it reads EEPQGQERELETRVKVGKSVSREKKDQESSSLIETDKKPEVKE. N6-acetyllysine is present on residues Lys813 and Lys816. Lys836 is covalently cross-linked (Glycyl lysine isopeptide (Lys-Gly) (interchain with G-Cter in SUMO2)). The span at 866 to 875 shows a compositional bias: basic residues; the sequence is RRGRCGRKNR. The segment covering 876-890 has biased composition (basic and acidic residues); it reads KTQERFGDKDSKMLV. The residue at position 901 (Tyr901) is a Phosphotyrosine. Residues 904–917 show a composition bias toward basic and acidic residues; sequence CEEKSETSQERFTE. Residues Ser941 and Ser954 each carry the phosphoserine modification. The disordered stretch occupies residues 983–1083; the sequence is GFSESSEEEE…EEEESELFPR (101 aa). At Lys1007 the chain carries N6-acetyllysine. The segment covering 1009 to 1030 has biased composition (basic residues); that stretch reads TLKRKKPILHRRRRVRKRKHHN. Over residues 1031–1042 the composition is skewed to low complexity; that stretch reads SSVVTETISETT. Composition is skewed to acidic residues over residues 1043–1053 and 1065–1079; these read EVLDEPFEDSD and FEME…EESE. Residues Ser1090, Ser1091, and Ser1115 each carry the phosphoserine modification. Disordered stretches follow at residues 1096–1174, 1197–1438, 1455–1533, 1546–1568, and 1631–1707; these read RCQS…RKPG, IKPG…GAYQ, HTDE…PSVS, DLGS…STMG, and TCVV…CSMN. The span at 1107-1120 shows a compositional bias: acidic residues; sequence EEEEEEEESDDADD. Polar residues predominate over residues 1136–1147; the sequence is NSASLEPDTSTP. A compositionally biased stretch (basic residues) spans 1148 to 1174; sequence MKKKKGWPKGKSRKPIHWKKRPGRKPG. Basic and acidic residues predominate over residues 1204-1229; that stretch reads RTQENEEIVEVKEDLLEERKEEMHTE. Acidic residues-rich tracts occupy residues 1230–1241 and 1282–1299; these read PDEEAEEEEDTT and EEPQ…DEVT. The span at 1317–1334 shows a compositional bias: basic and acidic residues; that stretch reads HLDSLKTKEPEEQPARED. A Glycyl lysine isopeptide (Lys-Gly) (interchain with G-Cter in SUMO2) cross-link involves residue Lys1336. Composition is skewed to basic and acidic residues over residues 1352-1361 and 1393-1414; these read DSRENTKDKD and DSNT…HSEL. Residues 1473 to 1490 show a composition bias toward low complexity; it reads HNSPISSIPSHPSQSVRS. Polar residues-rich tracts occupy residues 1502–1523 and 1550–1568; these read GYTQ…NMET and IEST…STMG. Positions 1511-1636 are interaction with RUNX1-2; the sequence is GSLSAPSMQN…KSPQTCVVER (126 aa). Positions 1511-1740 are interaction with PML; the sequence is GSLSAPSMQN…YERIPGDFGA (230 aa). Pro residues-rich tracts occupy residues 1640–1673 and 1682–1698; these read NQQP…PPQP and QPPP…PQQQ. The interval 1912 to 1947 is required for activation of RUNX1-2; sequence SMNMNTLNAMNSYRMTQPMMNSSYHSNPAYMNQTAQ.

Belongs to the MYST (SAS/MOZ) family. In terms of assembly, component of the MOZ/MORF complex composed at least of ING5, KAT6A, KAT6B, MEAF6 and one of BRPF1, BRD1/BRPF2 and BRPF3. Interacts with RUNX2. Interacts with RUNX1; phosphorylation of RUNX1 enhances the interaction. Interacts with p53/TP53. Interacts with PML and this interaction positively regulates its acetylation activity towards p53/TP53. Autoacetylated. Autoacetylation at Lys-603 is required for proper function. In terms of processing, phosphorylation at Thr-369 by PKB/AKT1 inhibits its interaction with PML and negatively regulates its acetylation activity towards p53/TP53.

The protein resides in the nucleus. The protein localises to the nucleolus. It is found in the nucleoplasm. It localises to the PML body. The catalysed reaction is L-lysyl-[protein] + acetyl-CoA = N(6)-acetyl-L-lysyl-[protein] + CoA + H(+). Functionally, histone acetyltransferase that acetylates lysine residues in histone H3 and histone H4 (in vitro). Component of the MOZ/MORF complex which has a histone H3 acetyltransferase activity. May act as a transcriptional coactivator for RUNX1 and RUNX2. Acetylates p53/TP53 at 'Lys-120' and 'Lys-382' and controls its transcriptional activity via association with PML. The sequence is that of Histone acetyltransferase KAT6A (Kat6a) from Mus musculus (Mouse).